The following is a 383-amino-acid chain: MNAGPSWNKVQHSKNSSGKRQSKSQVPHASSQPRSSLTAVTQPTEEKLKESISPEARRKRNPLGSRCQGASGNKLFLDFQSMKIIKENADEDSASDLSDSERIPIPPSPLTPPDLNLRAEEIDPVYFDLHPGQGHTKPEYYYPNFLPSPFSSWDLRDMALLLNAENKTEAVPRVGGLLGKYIDRLIQLEWLQVQTVQCEKAKGGKARPPTAPGTSGALKSPGRSKLIASALSKPLPHQEGASKSGPSRKKAFHHEEIHPSHYAFETSPRPIDVLGGTRFCSQRQTLEMRTEEKKKKSSKSTKLQRWDLSGSGSSSKVETSGHIRVPKQAAVILDSADSCKASKTQAHAHPRKKGKAESCGHATVSSEKKLKTNGVKQNTYKLK.

Disordered regions lie at residues 1–70 (MNAG…CQGA), 89–115 (ADED…PPDL), 200–222 (KAKG…KSPG), 232–251 (SKPL…RKKA), 284–325 (QTLE…HIRV), and 338–383 (SCKA…YKLK). A compositionally biased stretch (polar residues) spans 8–43 (NKVQHSKNSSGKRQSKSQVPHASSQPRSSLTAVTQP). Residues 44 to 56 (TEEKLKESISPEA) are compositionally biased toward basic and acidic residues. Residues 374–383 (GVKQNTYKLK) show a composition bias toward polar residues.

Belongs to the FAM217 family.

In Homo sapiens (Human), this protein is Protein FAM217B (FAM217B).